Reading from the N-terminus, the 230-residue chain is UPF0173 metal-dependent hydrolase LI0883 (230 aa).

This sequence belongs to the UPF0173 family.

The sequence is that of UPF0173 metal-dependent hydrolase LI0883 from Lawsonia intracellularis (strain PHE/MN1-00).